The chain runs to 832 residues: Polyphosphoinositide phosphatase (832 aa).

An SAC domain is found at 145 to 491 (IEKVDLARTF…GDAIALQYGG (347 aa)).

In terms of assembly, component of the PI(3,5)P2 regulatory complex. Requires Mg(2+) as cofactor.

The protein resides in the cytoplasm. Its subcellular location is the vacuole membrane. The catalysed reaction is a 1,2-diacyl-sn-glycero-3-phospho-(1D-myo-inositol-3,5-bisphosphate) + H2O = a 1,2-diacyl-sn-glycero-3-phospho-(1D-myo-inositol-3-phosphate) + phosphate. Functionally, the PI(3,5)P2 regulatory complex regulates both the synthesis and turnover of phosphatidylinositol 3,5-bisphosphate (PtdIns(3,5)P2). This Schizosaccharomyces pombe (strain 972 / ATCC 24843) (Fission yeast) protein is Polyphosphoinositide phosphatase.